The primary structure comprises 188 residues: MDKLNFFEEIRKDAEETYKLNPEDADNLMRWGEALLELSQFQNVIDSLKMIQDAISKLEDAILIDPMKHDAVWCLGNAYTSYARLTPDDTQARLNFGLAYLFFGIAVAQQPDNQVYHKSLEMADKAPQLHTGFHKNRLLSLLGGVETLAIPSPKVVKNKKSSDEKYIVMGWVILAIGVVACISFRKLR.

Residues 1 to 164 are Cytoplasmic-facing; it reads MDKLNFFEEI…VVKNKKSSDE (164 aa). Residues 165–182 traverse the membrane as a helical segment; that stretch reads KYIVMGWVILAIGVVACI. Over 183–188 the chain is Mitochondrial intermembrane; sequence SFRKLR.

Belongs to the Tom20 family. Forms part of the preprotein translocase complex of the outer mitochondrial membrane (TOM complex) which consists of at least 6 different proteins (TOM5, TOM6, TOM7, TOM20, TOM22/TOM9 and TOM40). Component of a mitochondrial large protein complex that contains, at least, MIC60, DGS1, TOM40, TOM20 proteins, and petC/RISP. As to expression, barely detected in roots.

It localises to the mitochondrion outer membrane. Functionally, central component of the receptor complex responsible for the recognition and translocation of cytosolically synthesized mitochondrial preproteins. Together with TOM22 functions as the transit peptide receptor at the surface of the mitochondrion outer membrane and facilitates the movement of preproteins into the translocation pore. In Arabidopsis thaliana (Mouse-ear cress), this protein is Mitochondrial import receptor subunit TOM20-1.